The chain runs to 72 residues: Probable protein transport protein Sec61 subunit gamma (72 aa).

The Cytoplasmic portion of the chain corresponds to 1–40 (MSQKLQKPSFLSEYLRSIRLFSKKCVRPSGKELSMSIKRH). The chain crosses the membrane as a helical span at residues 41-61 (AIGIGFLGILGYAIKLIHIPI). Residues 62-72 (NNIIVSSPGKE) lie on the Extracellular side of the membrane.

This sequence belongs to the SecE/SEC61-gamma family. Heterotrimeric complex composed of SEC61-alpha, SEC61-beta and SEC61-gamma.

Its subcellular location is the endoplasmic reticulum membrane. In terms of biological role, necessary for protein translocation in the endoplasmic reticulum. This chain is Probable protein transport protein Sec61 subunit gamma, found in Encephalitozoon cuniculi (strain GB-M1) (Microsporidian parasite).